A 312-amino-acid chain; its full sequence is Olfactory receptor 8K3 (312 aa).

The Extracellular segment spans residues methionine 1–alanine 25. A glycan (N-linked (GlcNAc...) asparagine) is linked at asparagine 5. A helical transmembrane segment spans residues proline 26–isoleucine 46. The Cytoplasmic segment spans residues valine 47–arginine 54. A helical transmembrane segment spans residues leucine 55–threonine 75. Residues threonine 76–threonine 99 lie on the Extracellular side of the membrane. A disulfide bond links cysteine 97 and cysteine 189. A helical transmembrane segment spans residues glutamine 100 to tyrosine 120. The Cytoplasmic segment spans residues aspartate 121–arginine 139. A helical membrane pass occupies residues valine 140–threonine 160. Over isoleucine 161–leucine 197 the chain is Extracellular. The helical transmembrane segment at isoleucine 198–serine 217 threads the bilayer. Over tyrosine 218 to alanine 236 the chain is Cytoplasmic. A helical membrane pass occupies residues phenylalanine 237–methionine 257. The Extracellular portion of the chain corresponds to tyrosine 258 to aspartate 270. The chain crosses the membrane as a helical span at residues lysine 271 to leucine 291. At arginine 292–valine 312 the chain is on the cytoplasmic side.

It belongs to the G-protein coupled receptor 1 family.

Its subcellular location is the cell membrane. Odorant receptor. The polypeptide is Olfactory receptor 8K3 (OR8K3) (Homo sapiens (Human)).